A 95-amino-acid polypeptide reads, in one-letter code: Large ribosomal subunit protein uL23 (95 aa).

This sequence belongs to the universal ribosomal protein uL23 family. Part of the 50S ribosomal subunit. Contacts protein L29, and trigger factor when it is bound to the ribosome.

Functionally, one of the early assembly proteins it binds 23S rRNA. One of the proteins that surrounds the polypeptide exit tunnel on the outside of the ribosome. Forms the main docking site for trigger factor binding to the ribosome. In Shouchella clausii (strain KSM-K16) (Alkalihalobacillus clausii), this protein is Large ribosomal subunit protein uL23.